A 112-amino-acid chain; its full sequence is Putative pterin-4-alpha-carbinolamine dehydratase (112 aa).

The protein belongs to the pterin-4-alpha-carbinolamine dehydratase family.

It carries out the reaction (4aS,6R)-4a-hydroxy-L-erythro-5,6,7,8-tetrahydrobiopterin = (6R)-L-erythro-6,7-dihydrobiopterin + H2O. This chain is Putative pterin-4-alpha-carbinolamine dehydratase, found in Shewanella baltica (strain OS223).